The following is a 255-amino-acid chain: Pimeloyl-[acyl-carrier protein] methyl ester esterase (255 aa).

Residues 16-242 enclose the AB hydrolase-1 domain; that stretch reads LVLLHGWGMN…SSHAPFITEP (227 aa). Substrate contacts are provided by residues Trp-22, 82-83, and 143-147; these read SL and FMALQ. The Nucleophile role is filled by Ser-82. Residues Asp-207 and His-235 contribute to the active site. His-235 provides a ligand contact to substrate.

This sequence belongs to the AB hydrolase superfamily. Carboxylesterase BioH family. In terms of assembly, monomer.

Its subcellular location is the cytoplasm. It catalyses the reaction 6-carboxyhexanoyl-[ACP] methyl ester + H2O = 6-carboxyhexanoyl-[ACP] + methanol + H(+). It functions in the pathway cofactor biosynthesis; biotin biosynthesis. The physiological role of BioH is to remove the methyl group introduced by BioC when the pimeloyl moiety is complete. It allows to synthesize pimeloyl-ACP via the fatty acid synthetic pathway through the hydrolysis of the ester bonds of pimeloyl-ACP esters. The polypeptide is Pimeloyl-[acyl-carrier protein] methyl ester esterase (Vibrio vulnificus (strain CMCP6)).